A 136-amino-acid polypeptide reads, in one-letter code: Large ribosomal subunit protein bL17 (136 aa).

The protein belongs to the bacterial ribosomal protein bL17 family. As to quaternary structure, part of the 50S ribosomal subunit. Contacts protein L32.

The sequence is that of Large ribosomal subunit protein bL17 from Rickettsia prowazekii (strain Madrid E).